Here is a 537-residue protein sequence, read N- to C-terminus: Phosphoenolpyruvate carboxykinase (ATP) (537 aa).

Substrate is bound by residues Arg64, Tyr204, and Lys210. Residues Lys210, His229, and 245–253 contribute to the ATP site; that span reads GLSGTGKTT. Lys210 and His229 together coordinate Mn(2+). Asp266 contributes to the Mn(2+) binding site. Residues Glu294, Arg330, 446-447, and Thr452 each bind ATP; that span reads RI. Substrate is bound at residue Arg330.

This sequence belongs to the phosphoenolpyruvate carboxykinase (ATP) family. As to quaternary structure, monomer. Requires Mn(2+) as cofactor.

It localises to the cytoplasm. The catalysed reaction is oxaloacetate + ATP = phosphoenolpyruvate + ADP + CO2. It participates in carbohydrate biosynthesis; gluconeogenesis. Its function is as follows. Involved in the gluconeogenesis. Catalyzes the conversion of oxaloacetate (OAA) to phosphoenolpyruvate (PEP) through direct phosphoryl transfer between the nucleoside triphosphate and OAA. The protein is Phosphoenolpyruvate carboxykinase (ATP) of Aliivibrio fischeri (strain ATCC 700601 / ES114) (Vibrio fischeri).